A 468-amino-acid chain; its full sequence is Aspartate ammonia-lyase (468 aa).

Residues Thr101, Ser140, Thr141, Asn142, Thr187, and His188 each coordinate L-aspartate. The tract at residues 317-326 (GSSIMPGKVN) is SS loop. Ser318 functions as the Proton acceptor in the catalytic mechanism. Ser319 and Lys324 together coordinate L-aspartate.

Belongs to the class-II fumarase/aspartase family. Aspartase subfamily. As to quaternary structure, homotetramer.

It catalyses the reaction L-aspartate = fumarate + NH4(+). With respect to regulation, unlike E.coli aspartase, the enzyme is not activated by the presence of divalent metal ions at alkaline pH. In terms of biological role, catalyzes the reversible conversion of L-aspartate to fumarate and ammonia. Is highly specific for L-aspartate in the deamination reaction, and cannot use alternative substrates such as D-aspartic acid, alpha-methyl-DL-aspartic acid, beta-methyl-DL-aspartic acid or L-glutamate. In the reverse reaction, alternative nucleophiles (such as hydroxylamine, hydrazine, methoxylamine and methylamine) can replace ammonia in vitro, leading to the formation of N-substituted aspartic acid derivatives. This Bacillus sp protein is Aspartate ammonia-lyase.